The sequence spans 335 residues: N-acetyl-gamma-glutamyl-phosphate reductase (335 aa).

C156 is an active-site residue.

The protein belongs to the NAGSA dehydrogenase family. Type 1 subfamily.

It localises to the cytoplasm. It catalyses the reaction N-acetyl-L-glutamate 5-semialdehyde + phosphate + NADP(+) = N-acetyl-L-glutamyl 5-phosphate + NADPH + H(+). Its pathway is amino-acid biosynthesis; L-arginine biosynthesis; N(2)-acetyl-L-ornithine from L-glutamate: step 3/4. Catalyzes the NADPH-dependent reduction of N-acetyl-5-glutamyl phosphate to yield N-acetyl-L-glutamate 5-semialdehyde. This is N-acetyl-gamma-glutamyl-phosphate reductase from Aeromonas hydrophila subsp. hydrophila (strain ATCC 7966 / DSM 30187 / BCRC 13018 / CCUG 14551 / JCM 1027 / KCTC 2358 / NCIMB 9240 / NCTC 8049).